We begin with the raw amino-acid sequence, 179 residues long: MSAARGAVIWMTGLSGAGKSTLANALHLRLKEAGQAAIVLDGDVLRRGLNADLGFTPEDRTENLRRVAHVAALFMQQGFVVIAAVISPEHRHRRAAREIVGEGFVEVFVNAPLQVCEARDAKGLYARARRGEIAHFTGISDPFEAPLAADLVIETDRMPVNEGVDRLLAHLVTMGRVSG.

Residue G13–S20 coordinates ATP. The active-site Phosphoserine intermediate is S87.

It belongs to the APS kinase family.

It carries out the reaction adenosine 5'-phosphosulfate + ATP = 3'-phosphoadenylyl sulfate + ADP + H(+). It participates in sulfur metabolism; hydrogen sulfide biosynthesis; sulfite from sulfate: step 2/3. Its function is as follows. Catalyzes the synthesis of activated sulfate. This Paraburkholderia xenovorans (strain LB400) protein is Adenylyl-sulfate kinase.